Reading from the N-terminus, the 200-residue chain is Glycerol-3-phosphate acyltransferase (200 aa).

5 consecutive transmembrane segments (helical) span residues 2 to 22, 51 to 71, 84 to 104, 114 to 134, and 159 to 179; these read FNIP…AVIV, KAAV…VLLA, AIAA…FFGF, LGVL…IWLV, and FFMP…LVLF.

It belongs to the PlsY family. Probably interacts with PlsX.

It is found in the cell inner membrane. The enzyme catalyses an acyl phosphate + sn-glycerol 3-phosphate = a 1-acyl-sn-glycero-3-phosphate + phosphate. The protein operates within lipid metabolism; phospholipid metabolism. In terms of biological role, catalyzes the transfer of an acyl group from acyl-phosphate (acyl-PO(4)) to glycerol-3-phosphate (G3P) to form lysophosphatidic acid (LPA). This enzyme utilizes acyl-phosphate as fatty acyl donor, but not acyl-CoA or acyl-ACP. In Neisseria meningitidis serogroup C / serotype 2a (strain ATCC 700532 / DSM 15464 / FAM18), this protein is Glycerol-3-phosphate acyltransferase.